The primary structure comprises 210 residues: 7-carboxy-7-deazaguanine synthase (210 aa).

Residues 12–14 (LQG) and arginine 27 contribute to the substrate site. The Radical SAM core domain maps to 18–210 (HAGRASVFCR…VQTHKSLGIR (193 aa)). Positions 31, 46, and 49 each coordinate [4Fe-4S] cluster. Position 51 (threonine 51) interacts with Mg(2+). Threonine 90 contributes to the substrate binding site. Residues glycine 92, 133-135 (SPK), and 173-176 (QPMD) contribute to the S-adenosyl-L-methionine site.

The protein belongs to the radical SAM superfamily. 7-carboxy-7-deazaguanine synthase family. In terms of assembly, homodimer. The cofactor is [4Fe-4S] cluster. S-adenosyl-L-methionine serves as cofactor. Requires Mg(2+) as cofactor.

It carries out the reaction 6-carboxy-5,6,7,8-tetrahydropterin + H(+) = 7-carboxy-7-deazaguanine + NH4(+). Its pathway is purine metabolism; 7-cyano-7-deazaguanine biosynthesis. In terms of biological role, catalyzes the complex heterocyclic radical-mediated conversion of 6-carboxy-5,6,7,8-tetrahydropterin (CPH4) to 7-carboxy-7-deazaguanine (CDG), a step common to the biosynthetic pathways of all 7-deazapurine-containing compounds. The chain is 7-carboxy-7-deazaguanine synthase from Bradyrhizobium diazoefficiens (strain JCM 10833 / BCRC 13528 / IAM 13628 / NBRC 14792 / USDA 110).